A 344-amino-acid polypeptide reads, in one-letter code: CRISPR-associated endonuclease Cas1 2 (344 aa).

Mn(2+) is bound by residues Glu-167, His-235, and Glu-250.

It belongs to the CRISPR-associated endonuclease Cas1 family. As to quaternary structure, homodimer, forms a heterotetramer with a Cas2 homodimer. It depends on Mg(2+) as a cofactor. Requires Mn(2+) as cofactor.

In terms of biological role, CRISPR (clustered regularly interspaced short palindromic repeat), is an adaptive immune system that provides protection against mobile genetic elements (viruses, transposable elements and conjugative plasmids). CRISPR clusters contain spacers, sequences complementary to antecedent mobile elements, and target invading nucleic acids. CRISPR clusters are transcribed and processed into CRISPR RNA (crRNA). Acts as a dsDNA endonuclease. Involved in the integration of spacer DNA into the CRISPR cassette. This is CRISPR-associated endonuclease Cas1 2 from Rhodospirillum rubrum (strain ATCC 11170 / ATH 1.1.1 / DSM 467 / LMG 4362 / NCIMB 8255 / S1).